The chain runs to 454 residues: MKHLASSIALTLLLPAVQAQQTVWGQCGGQGWSGPTSCVAGAACSTLNPYYAQCIPGATATSTTLTTTTAATTTSQTTTKPTTTGPTTSAPTVTASGNPFSGYQLYANPYYSSEVHTLAMPSLPSSLQPKASAVAEVPSFVWLDVAAKVPTMGTYLADIQAKNKAGANPPIAGIFVVYDLPDRDCAALASNGEYSIANNGVANYKAYIDAIRAQLVKYSDVHTILVIEPDSLANLVTNLNVAKCANAQSAYLECVDYALKQLNLPNVAMYLDAGHAGWLGWPANLGPAATLFAKVYTDAGSPAAVRGLATNVANYNAWSLSTCPSYTQGDPNCDEKKYINAMAPLLKEAGFDAHFIMDTSRNGVQPTKQNAWGDWCNVIGTGFGVRPSTNTGDPLQDAFVWIKPGGESDGTSNSTSPRYDAHCGYSDALQPAPEAGTWFQAYFEQLLTNANPSF.

Positions 1–19 are cleaved as a signal peptide; the sequence is MKHLASSIALTLLLPAVQA. Positions 20–55 constitute a CBM1 domain; that stretch reads QQTVWGQCGGQGWSGPTSCVAGAACSTLNPYYAQCI. 2 disulfide bridges follow: Cys-27–Cys-44 and Cys-38–Cys-54. Thr-rich linker regions lie at residues 59–94 and 95–454; these read TATSTTLTTTTAATTTSQTTTKPTTTGPTTSAPTVT and ASGN…NPSF. The disordered stretch occupies residues 68-95; the sequence is TTAATTTSQTTTKPTTTGPTTSAPTVTA. The active site involves Asp-184. Intrachain disulfides connect Cys-185–Cys-244 and Cys-376–Cys-423. Asp-230 (proton donor) is an active-site residue. Residue Asp-409 is the Nucleophile of the active site. N-linked (GlcNAc...) asparagine glycosylation is present at Asn-413.

This sequence belongs to the glycosyl hydrolase 6 (cellulase B) family.

The protein resides in the secreted. It carries out the reaction Hydrolysis of (1-&gt;4)-beta-D-glucosidic linkages in cellulose and cellotetraose, releasing cellobiose from the non-reducing ends of the chains.. Functionally, the biological conversion of cellulose to glucose generally requires three types of hydrolytic enzymes: (1) Endoglucanases which cut internal beta-1,4-glucosidic bonds; (2) Exocellobiohydrolases that cut the disaccharide cellobiose from the non-reducing end of the cellulose polymer chain; (3) Beta-1,4-glucosidases which hydrolyze the cellobiose and other short cello-oligosaccharides to glucose. This Aspergillus fumigatus (strain CBS 144.89 / FGSC A1163 / CEA10) (Neosartorya fumigata) protein is Probable 1,4-beta-D-glucan cellobiohydrolase C (cbhC).